The sequence spans 382 residues: Bestrophin-6 (382 aa).

The next 4 membrane-spanning stretches (helical) occupy residues 29–49 (WKLIHRELFMWLVLYYTVLAI), 68–88 (FINFEPSILTFMLSFFVTTIV), 231–251 (LAYPQVIFFAVRLYFVICAFA), and 265–285 (VIHYYFPIVTVFQFICLMGWL).

Belongs to the anion channel-forming bestrophin (TC 1.A.46) family. Calcium-sensitive chloride channel subfamily.

It is found in the membrane. This is Bestrophin-6 (best-6) from Caenorhabditis elegans.